The sequence spans 391 residues: Polyketide synthase 1 (391 aa).

Residue Cys164 is part of the active site.

This sequence belongs to the thiolase-like superfamily. Chalcone/stilbene synthases family. Homodimer. As to expression, expressed in fruits.

It catalyses the reaction (E)-4-coumaroyl-CoA + 3 malonyl-CoA + 3 H(+) = 2',4,4',6'-tetrahydroxychalcone + 3 CO2 + 4 CoA. The protein operates within secondary metabolite biosynthesis; flavonoid biosynthesis. Functionally, polyketide synthase producing naringenin chalcone and slightly p-coumaryltriacetic acid lactone (CTAL). Can use p-coumaryl-CoA as substrate. The protein is Polyketide synthase 1 (PKS1) of Rubus idaeus (Raspberry).